We begin with the raw amino-acid sequence, 271 residues long: Putative phosphoenolpyruvate synthase regulatory protein (271 aa).

Residue 152-159 coordinates ADP; that stretch reads GVSRSGKT.

Belongs to the pyruvate, phosphate/water dikinase regulatory protein family. PSRP subfamily.

The catalysed reaction is [pyruvate, water dikinase] + ADP = [pyruvate, water dikinase]-phosphate + AMP + H(+). It catalyses the reaction [pyruvate, water dikinase]-phosphate + phosphate + H(+) = [pyruvate, water dikinase] + diphosphate. Its function is as follows. Bifunctional serine/threonine kinase and phosphorylase involved in the regulation of the phosphoenolpyruvate synthase (PEPS) by catalyzing its phosphorylation/dephosphorylation. The sequence is that of Putative phosphoenolpyruvate synthase regulatory protein from Dichelobacter nodosus (strain VCS1703A).